A 597-amino-acid chain; its full sequence is Arginine--tRNA ligase (597 aa).

The short motif at 138–148 is the 'HIGH' region element; sequence ANPTGPMHVGH.

Belongs to the class-I aminoacyl-tRNA synthetase family. In terms of assembly, monomer.

It localises to the cytoplasm. It catalyses the reaction tRNA(Arg) + L-arginine + ATP = L-arginyl-tRNA(Arg) + AMP + diphosphate. The protein is Arginine--tRNA ligase of Rhodopseudomonas palustris (strain ATCC BAA-98 / CGA009).